The following is a 352-amino-acid chain: Selenide, water dikinase (352 aa).

Residue cysteine 23 is part of the active site. ATP is bound by residues lysine 26 and serine 54–aspartate 56. Aspartate 57 is a Mg(2+) binding site. Residues aspartate 74, aspartate 97, and glycine 145 to serine 147 contribute to the ATP site. Aspartate 97 contributes to the Mg(2+) binding site. Aspartate 233 contacts Mg(2+).

It belongs to the selenophosphate synthase 1 family. Class I subfamily. Homodimer. Mg(2+) is required as a cofactor.

The catalysed reaction is hydrogenselenide + ATP + H2O = selenophosphate + AMP + phosphate + 2 H(+). Its function is as follows. Synthesizes selenophosphate from selenide and ATP. This chain is Selenide, water dikinase, found in Shewanella sp. (strain MR-4).